We begin with the raw amino-acid sequence, 370 residues long: MTFFTRCFRRGALLFLLAVLLLPSPAQAVRIKDIASFGGVRDNDLMGYGLVVGLGGTGDKKSSTFTISSMVNMLDKMGIAVDRTKLTPKNVAAVMVTTRMPVSARPGSRLDITVSSLGDATSLLGGVLLMTPMKGVDGKVYALAQGPLALGGFSAEGDAARAQKNITTVGRIPGGAVVERAVPFEFNTQNKLTLHMNVQDFSTTMQVVDRLNDNMGGQFASARDIATVDIMVPPAYRGNLVPLMASLENLPVTPDSPARVVVDEKTGTVVVGNSVRISKVAVSHGNLQIVVQENPQVSQPGAFSPGQTVVTPQTDIAAQEENRRLVMMEGATLQELVDGLNSIGATPRDLISILRTLKAAGALHAELEVI.

The N-terminal stretch at 1-28 (MTFFTRCFRRGALLFLLAVLLLPSPAQA) is a signal peptide.

The protein belongs to the FlgI family. The basal body constitutes a major portion of the flagellar organelle and consists of four rings (L,P,S, and M) mounted on a central rod.

It localises to the periplasm. The protein localises to the bacterial flagellum basal body. In terms of biological role, assembles around the rod to form the L-ring and probably protects the motor/basal body from shearing forces during rotation. In Oleidesulfovibrio alaskensis (strain ATCC BAA-1058 / DSM 17464 / G20) (Desulfovibrio alaskensis), this protein is Flagellar P-ring protein.